The primary structure comprises 117 residues: uncharacterized protein (117 aa).

This is an uncharacterized protein from Escherichia coli O157:H7.